The following is a 118-amino-acid chain: Vitelline membrane protein Vm32E (118 aa).

The signal sequence occupies residues 1 to 17; sequence MKIVALTLVAFVALAGA. The 40-residue stretch at 36–75 folds into the VM domain; the sequence is GYPAPPCPTNYLFSCQPNLAPAPCAQEAQAPAYGSAGAYT.

Belongs to the vitelline membrane family.

Its subcellular location is the secreted. Major early eggshell protein. The chain is Vitelline membrane protein Vm32E from Drosophila mauritiana (Fruit fly).